The primary structure comprises 1309 residues: Target of rapamycin complex 2 subunit ste20 (1309 aa).

One can recognise an REM-1 domain in the interval 24–110 (DFIKKMNTTD…IESFQGENGE (87 aa)). Residues 105 to 128 (QGENGEAKTGSTSLTRSASATVSR) form a disordered region. The span at 113–128 (TGSTSLTRSASATVSR) shows a compositional bias: polar residues. Ser151 carries the phosphoserine modification. Positions 183–205 (NVNEKNNSSSEDTQPNGKRPSSL) are disordered. The span at 194 to 205 (DTQPNGKRPSSL) shows a compositional bias: polar residues. Transmembrane regions (helical) follow at residues 285–305 (LFLDATAFSCCQMLNLPWILS), 392–412 (LIDGSISENLAASAALALVYL), 504–524 (VIDLFFLIFQVEYSSWSESFL), 564–584 (TAVLLFIFLELGLVESIVCMI), 926–946 (LNHWAISLLIFQLYDPCLEVC), and 984–1004 (LLLRFLATTVGFHYLSEINFI). Position 1203 is a phosphothreonine (Thr1203).

The protein belongs to the RICTOR family. As to quaternary structure, the target of rapamycin complex 2 (TORC2) is composed of at least bit61, pop3/wat1, sin1, ste20 and tor1. Post-translationally, either Ser-203 or Ser-204 are phosphorylated as well.

It localises to the membrane. Functionally, component of TORC2, which regulates multiple cellular processes to control cell growth in response to environmental signals. TORC2 is required for cell survival under various stress conditions. TORC2 positively controls G1 cell-cycle arrest, sexual development and amino acid uptake. Positively regulates amino acid uptake through the control of expression of amino acid permeases. This is Target of rapamycin complex 2 subunit ste20 from Schizosaccharomyces pombe (strain 972 / ATCC 24843) (Fission yeast).